Reading from the N-terminus, the 485-residue chain is Glutamyl-tRNA(Gln) amidotransferase subunit A (485 aa).

Residues lysine 78 and serine 153 each act as charge relay system in the active site. The active-site Acyl-ester intermediate is serine 177.

Belongs to the amidase family. GatA subfamily. As to quaternary structure, heterotrimer of A, B and C subunits.

The enzyme catalyses L-glutamyl-tRNA(Gln) + L-glutamine + ATP + H2O = L-glutaminyl-tRNA(Gln) + L-glutamate + ADP + phosphate + H(+). Functionally, allows the formation of correctly charged Gln-tRNA(Gln) through the transamidation of misacylated Glu-tRNA(Gln) in organisms which lack glutaminyl-tRNA synthetase. The reaction takes place in the presence of glutamine and ATP through an activated gamma-phospho-Glu-tRNA(Gln). This is Glutamyl-tRNA(Gln) amidotransferase subunit A from Pelobacter propionicus (strain DSM 2379 / NBRC 103807 / OttBd1).